We begin with the raw amino-acid sequence, 412 residues long: Peptidyl-prolyl cis-trans isomerase FKBP8 (412 aa).

The disordered stretch occupies residues Met1–Gln68. Acidic residues predominate over residues Glu22–Ser50. The 85-residue stretch at Gly120–Val204 folds into the PPIase FKBP-type domain. Positions 149 and 151 each coordinate Ca(2+). The TPR 1 repeat unit spans residues Ala221–Ser254. Glycyl lysine isopeptide (Lys-Gly) (interchain with G-Cter in ubiquitin) cross-links involve residues Lys249, Lys271, Lys273, and Lys284. TPR repeat units follow at residues Val272–Asn305 and Ile306–Asn339. Ser296 carries the phosphoserine modification. Glycyl lysine isopeptide (Lys-Gly) (interchain with G-Cter in ubiquitin) cross-links involve residues Lys307, Lys314, Lys334, Lys340, Lys348, Lys351, and Lys352. The helical transmembrane segment at Trp390–Ala410 threads the bilayer.

As to quaternary structure, homomultimers or heteromultimers (Potential). Forms heterodimer with calmodulin. When activated by calmodulin and calcium, interacts with the BH4 domain of BCL2 and weakly with BCL2L1/BCLX isoform Bcl-X(L). Does not bind and inhibit calcineurin. Interacts with ZFYVE27; may negatively regulate ZFYVE27 phosphorylation. (Microbial infection) Interacts with hepatitis C/HCV protein NS5A. Requires Ca(2+) as cofactor. Post-translationally, ubiquitinated by PRKN during mitophagy, leading to its degradation and enhancement of mitophagy. Deubiquitinated by USP30. In terms of tissue distribution, widely expressed. Highest levels seen in the brain. Highly abundant in the retina.

The protein localises to the mitochondrion. The protein resides in the mitochondrion membrane. It carries out the reaction [protein]-peptidylproline (omega=180) = [protein]-peptidylproline (omega=0). Functionally, constitutively inactive PPiase, which becomes active when bound to calmodulin and calcium. Seems to act as a chaperone for BCL2, targets it to the mitochondria and modulates its phosphorylation state. The BCL2/FKBP8/calmodulin/calcium complex probably interferes with the binding of BCL2 to its targets. The active form of FKBP8 may therefore play a role in the regulation of apoptosis. Involved in the inhibition of viral infection by influenza A viruses (IAV). This is Peptidyl-prolyl cis-trans isomerase FKBP8 (FKBP8) from Homo sapiens (Human).